A 316-amino-acid polypeptide reads, in one-letter code: MTRTYENFQYLENKVKVQGFKNGPLPLQSLLQRLCSGPCHLLLSLGLGLLLLVIICVVGFQNSKFQRDLVTLRTDFSNFTSNTVAEIQALTSQGSSLEETIASLKAEVEGFKQERQAGVSELQEHTTQKAHLGHCPHCPSVCVPVHSEMLLRVQQLVQDLKKLTCQVATLNNNASTEGTCCPVNWVEHQDSCYWFSHSGMSWAEAEKYCQLKNAHLVVINSREEQNFVQKYLGSAYTWMGLSDPEGAWKWVDGTDYATGFQNWKPGQPDDWQGHGLGGGEDCAHFHPDGRWNDDVCQRPYHWVCEAGLGQTSQESH.

Over 1-39 (MTRTYENFQYLENKVKVQGFKNGPLPLQSLLQRLCSGPC) the chain is Cytoplasmic. The Endocytosis signal motif lies at 5 to 8 (YENF). The chain crosses the membrane as a helical; Signal-anchor for type II membrane protein span at residues 40–60 (HLLLSLGLGLLLLVIICVVGF). Over 61 to 316 (QNSKFQRDLV…GLGQTSQESH (256 aa)) the chain is Extracellular. N-linked (GlcNAc...) asparagine glycosylation is found at Asn-78 and Asn-173. Residues 85-176 (AEIQALTSQG…VATLNNNAST (92 aa)) adopt a coiled-coil conformation. 3 disulfides stabilise this stretch: Cys-181–Cys-192, Cys-209–Cys-304, and Cys-282–Cys-296. The C-type lectin domain maps to 188–305 (HQDSCYWFSH…CQRPYHWVCE (118 aa)). Residues Val-218, Asn-220, Glu-224, and Asp-243 each coordinate Ca(2+). Residues Gln-267 and Asp-269 each coordinate a glycoprotein. The Ca(2+) site is built by Asp-269, Asp-270, Glu-280, and Asp-281. Position 280 (Glu-280) interacts with a glycoprotein. Residues His-286 and Asn-292 each contribute to the a glycoprotein site. Residues Asn-292, Asp-293, and Glu-305 each contribute to the Ca(2+) site.

As to quaternary structure, interacts with A-, B- and C-domain containing PTPRC/CD45 isoforms: isoform 1/CD45ABC, isoform 3/CD45AB, isoform 5/CD45BC and isoform 7/CD45B. Does not interact with PTPRC/CD45 isoform 2/CD45RO, a memory T cell marker. Expressed in myeloid antigen presenting cells in lymph nodes and skin (at protein level). Expressed in dermal dendritic cells (at protein level).

It is found in the cell membrane. The protein resides in the early endosome membrane. It localises to the lysosome membrane. Its function is as follows. C-type lectin receptor involved in recognition of N-acetylgalactosamine (GalNAc)-terminated glycans by myeloid antigen presenting cells (APCs). Binds in a Ca(2+)-dependent manner to alpha- and beta-linked GalNAc residues on glycoprotein and glycolipid antigens, including alphaGalNAc- and Galbeta1-&gt;3GalNAc-O-Ser/Thr also known as Tn and T antigens, LacdiNAc epitope GalNAcbeta1-&gt;4GlcNAc and its derivative GalNAcbeta1-&gt;4-(Fucalpha1-&gt;3)GlcNAc, O-linked core 5 and 6 glycans, and GM2 and GD2 gangliosides. Acts as a signaling receptor at the interface of APC-T cell interactions. On immature dendritic cells, recognizes Tn antigen-carrying PTPRC/CD45 receptor on effector T cells and downregulates PTRPN/CD45 phosphatase activity with an impact on T cell activation threshold, cytokine production and proliferation. Modulates dendritic cell maturation toward a tolerogenic phenotype leading to generation of regulatory CD4-positive T cell subset with immune suppressive functions. Acts as an endocytic pattern recognition receptor involved in antitumor immunity. During tumorigenesis, recognizes Tn antigens and its sialylated forms Neu5Ac-Tn and Neu5Gc-Tn expressed on tumor cell mucins. On immature dendritic cells, can internalize Tn-terminated immunogens and target them to endolysosomal compartment for MHC class I and II antigen presentation to CD8-positive and CD4-positive T cells, respectively. This is C-type lectin domain family 10 member A from Homo sapiens (Human).